A 366-amino-acid chain; its full sequence is ATPase ASNA1 homolog (366 aa).

Residue 33 to 40 coordinates ATP; sequence KGGVGKTT. D62 is an active-site residue. Residues E234 and N261 each contribute to the ATP site.

The protein belongs to the arsA ATPase family. As to quaternary structure, homodimer.

The protein localises to the cytoplasm. Its subcellular location is the endoplasmic reticulum. ATPase required for the post-translational delivery of tail-anchored (TA) proteins to the endoplasmic reticulum. Recognizes and selectively binds the transmembrane domain of TA proteins in the cytosol. This complex then targets to the endoplasmic reticulum by membrane-bound receptors, where the tail-anchored protein is released for insertion. This process is regulated by ATP binding and hydrolysis. ATP binding drives the homodimer towards the closed dimer state, facilitating recognition of newly synthesized TA membrane proteins. ATP hydrolysis is required for insertion. Subsequently, the homodimer reverts towards the open dimer state, lowering its affinity for the membrane-bound receptor, and returning it to the cytosol to initiate a new round of targeting. This Cryptosporidium parvum (strain Iowa II) protein is ATPase ASNA1 homolog.